Consider the following 270-residue polypeptide: tRNA pseudouridine synthase A (270 aa).

Asp-60 serves as the catalytic Nucleophile. Tyr-118 is a binding site for substrate.

The protein belongs to the tRNA pseudouridine synthase TruA family. In terms of assembly, homodimer.

It carries out the reaction uridine(38/39/40) in tRNA = pseudouridine(38/39/40) in tRNA. Its function is as follows. Formation of pseudouridine at positions 38, 39 and 40 in the anticodon stem and loop of transfer RNAs. The sequence is that of tRNA pseudouridine synthase A from Salmonella arizonae (strain ATCC BAA-731 / CDC346-86 / RSK2980).